A 313-amino-acid chain; its full sequence is 3-O-acetylpapaveroxine carboxylesterase CXE2 (313 aa).

The Involved in the stabilization of the negatively charged intermediate by the formation of the oxyanion hole signature appears at 72 to 74 (HGG). Catalysis depends on residues serine 158, aspartate 262, and histidine 292.

It belongs to the 'GDXG' lipolytic enzyme family.

It catalyses the reaction 3-O-acetylpapaveroxine + H2O = narcotine hemiacetal + acetate + H(+). Its pathway is alkaloid biosynthesis. In terms of biological role, carboxylesterase involved in the biosynthesis of the benzylisoquinoline alkaloid noscapine. Converts 3-O-acetylpapaveroxine to narcotine hemiacetal. The polypeptide is 3-O-acetylpapaveroxine carboxylesterase CXE2 (Papaver somniferum (Opium poppy)).